A 791-amino-acid chain; its full sequence is FHF complex subunit HOOK-interacting protein 1B (791 aa).

Disordered regions lie at residues 465 to 510 and 524 to 556; these read APSP…VPRP and SLGGSESPGPAPRSPGLTASPTSSPGRRPSPAE. Phosphoserine is present on Ser467. Residues 496 to 510 are compositionally biased toward low complexity; the sequence is SPSVDSSSVVTVPRP. Phosphoserine is present on residues Ser524, Ser537, Ser543, Ser547, and Ser679. Low complexity predominate over residues 541-552; the sequence is TASPTSSPGRRP. Residue Thr708 is modified to Phosphothreonine. Position 716 is a phosphoserine (Ser716).

It belongs to the FHIP family. As to quaternary structure, component of the FTS/Hook/FHIP complex (FHF complex), composed of AKTIP/FTS, FHIP1B, and one or more members of the Hook family of proteins HOOK1, HOOK2, and HOOK3. The FHF complex associates with the homotypic vesicular sorting complex (the HOPS complex).

In terms of biological role, component of the FTS/Hook/FHIP complex (FHF complex). The FHF complex may function to promote vesicle trafficking and/or fusion via the homotypic vesicular protein sorting complex (the HOPS complex). FHF complex promotes the distribution of AP-4 complex to the perinuclear area of the cell. The polypeptide is FHF complex subunit HOOK-interacting protein 1B (Fhip1b) (Rattus norvegicus (Rat)).